The sequence spans 390 residues: ATP-sensitive inward rectifier potassium channel 11 (390 aa).

Residues 1–65 are Cytoplasmic-facing; sequence MLSRKGIIPE…LQDVFTTLVD (65 aa). 2 residues coordinate ATP: N48 and R50. The chain crosses the membrane as a helical span at residues 66 to 92; that stretch reads LKWTHTLLIFTMSFLCSWLLFAMVWWL. At 93 to 116 the chain is on the extracellular side; it reads IAFAHGDLAPGEGAAVPCVTSIHS. Cysteines 110 and 142 form a disulfide. The discontinuously helical; Pore-forming intramembrane region spans 117-133; that stretch reads FSSAFLFSIEVQVTIGF. T130 and F133 together coordinate K(+). A Selectivity filter motif is present at residues 130-135; sequence TIGFGG. Topologically, residues 134–142 are extracellular; sequence GGRMVTEEC. The chain crosses the membrane as a helical span at residues 143–171; sequence PLAILILIVQNIVGLMINAIMLGCIFMKT. Residues 172–390 lie on the Cytoplasmic side of the membrane; the sequence is AQAHRRAETL…KFSISPDSLS (219 aa). R176 is a binding site for a 1,2-diacyl-sn-glycero-3-phospho-(1D-myo-inositol-4,5-bisphosphate). Y330 lines the ATP pocket. Position 341 is a phosphothreonine; by MAPK1 (T341). Phosphoserine; by MAPK1 is present on S385.

It belongs to the inward rectifier-type potassium channel (TC 1.A.2.1) family. KCNJ11 subfamily. In terms of assembly, homotetramer; the homotetramer binds four ATP molecules (one ATP per subunit). Forms an heterooctamer with ABCC8/SUR1; one KCNJ11 homotetramer interacts with four ABCC8/SUR1 molecules. Interacts with ABCC9/SUR2. Phosphorylation by MAPK1 results in changes in channel gating that destabilize the closed states and reduce the ATP sensitivity.

Its subcellular location is the membrane. The enzyme catalyses K(+)(in) = K(+)(out). KATP channels are regulated by cytoplasmic ATP/ADP ratios; ATP inhibits the channel by closing the pore, while ADP activates the channel. Activated by phosphatidylinositol 4,5-biphosphate (PtdIns(4,5)P2). Functionally, inward rectifier potassium channel that forms the pore of ATP-sensitive potassium channels (KATP), regulating potassium permeability as a function of cytoplasmic ATP and ADP concentrations in many different cells. Inward rectifier potassium channels are characterized by a greater tendency to allow potassium to flow into the cell rather than out of it. Their voltage dependence is regulated by the concentration of extracellular potassium; as external potassium is raised, the voltage range of the channel opening shifts to more positive voltages. The inward rectification is mainly due to the blockage of outward current by internal magnesium. Can be blocked by extracellular barium. In pancreatic cells, it forms KATP channels with ABCC8/SUR1. Can form cardiac and smooth muscle-type KATP channels with ABCC9. This chain is ATP-sensitive inward rectifier potassium channel 11 (KCNJ11), found in Oryctolagus cuniculus (Rabbit).